Reading from the N-terminus, the 377-residue chain is 3-dehydroquinate synthase (377 aa).

Residues 115 to 119 (GVIGD), 139 to 140 (TS), K152, and K162 contribute to the NAD(+) site. E195, H257, and H276 together coordinate Zn(2+).

The protein belongs to the sugar phosphate cyclases superfamily. Dehydroquinate synthase family. The cofactor is Co(2+). Requires Zn(2+) as cofactor. NAD(+) is required as a cofactor.

The protein resides in the cytoplasm. The enzyme catalyses 7-phospho-2-dehydro-3-deoxy-D-arabino-heptonate = 3-dehydroquinate + phosphate. The protein operates within metabolic intermediate biosynthesis; chorismate biosynthesis; chorismate from D-erythrose 4-phosphate and phosphoenolpyruvate: step 2/7. Its function is as follows. Catalyzes the conversion of 3-deoxy-D-arabino-heptulosonate 7-phosphate (DAHP) to dehydroquinate (DHQ). This is 3-dehydroquinate synthase from Rhizobium etli (strain ATCC 51251 / DSM 11541 / JCM 21823 / NBRC 15573 / CFN 42).